The sequence spans 368 residues: 3-dehydroquinate synthase (368 aa).

NAD(+)-binding positions include 69-74, 103-107, 127-128, Lys-140, and Lys-149; these read DGEAYK, GVIGD, and TT. Zn(2+) contacts are provided by Glu-182, His-245, and His-262.

This sequence belongs to the sugar phosphate cyclases superfamily. Dehydroquinate synthase family. NAD(+) serves as cofactor. The cofactor is Co(2+). It depends on Zn(2+) as a cofactor.

Its subcellular location is the cytoplasm. The catalysed reaction is 7-phospho-2-dehydro-3-deoxy-D-arabino-heptonate = 3-dehydroquinate + phosphate. The protein operates within metabolic intermediate biosynthesis; chorismate biosynthesis; chorismate from D-erythrose 4-phosphate and phosphoenolpyruvate: step 2/7. Functionally, catalyzes the conversion of 3-deoxy-D-arabino-heptulosonate 7-phosphate (DAHP) to dehydroquinate (DHQ). This chain is 3-dehydroquinate synthase, found in Pseudomonas aeruginosa (strain ATCC 15692 / DSM 22644 / CIP 104116 / JCM 14847 / LMG 12228 / 1C / PRS 101 / PAO1).